We begin with the raw amino-acid sequence, 382 residues long: MEARRARQKALKVKNLKDVRYMKLISMETSSSSDDSCDSFASDNFANTRLQLNREGCRTRSQCRHSGPLRVAMKFPARNTRRAASKKAAPPKPSESSANDSHSDSEEEEEEEEEEDGMNFLEKRALNIKQNKAMLAKLMSELESFPGLFSGRHSLPGHRAKDSKSPRRRTFPGVATRRNPERRTRPLTRSRSRILGSLGALPTEEEEEEEEEEEDKYMLVRQRKSMDSYMNDDDVPRSRRPGSMTLPHIIRPVEEVTEEEIRNICSNSREKIYNRSLGSTCHQCRQKTTDTKTNCRNPDCWGIRGQFCGPCLRNRYGEEVKDALLDPNWHCPPCRGICNCSFCRQRDGRCATGVLVYLAKYHGFGNVHAYLKSLKQEFEMQA.

Disordered regions lie at residues 68–118 (PLRV…EDGM) and 151–217 (GRHS…EDKY). Over residues 105–117 (SEEEEEEEEEEDG) the composition is skewed to acidic residues. Residues 152-177 (RHSLPGHRAKDSKSPRRRTFPGVATR) are interaction with MYC. Residues 167 to 183 (RRRTFPGVATRRNPERR) carry the Nuclear localization signal motif. A Phosphothreonine modification is found at Thr170. Ser197 is subject to Phosphoserine. At Thr203 the chain carries Phosphothreonine. Residues 203 to 215 (TEEEEEEEEEEED) are compositionally biased toward acidic residues. A Glycyl lysine isopeptide (Lys-Gly) (interchain with G-Cter in SUMO2) cross-link involves residue Lys216. Position 225 is a phosphoserine (Ser225). Residues 258 to 382 (EEEIRNICSN…SLKQEFEMQA (125 aa)) are mediates transcriptional activity.

Interacts with MYC (via C-terminus), YWHAE and YWHAZ. Post-translationally, phosphorylation at Thr-170 promotes interaction with YWHAE and YWHAZ, dissociation from MYC and sequestration in the cytoplasm.

The protein resides in the nucleus. It is found in the cytoplasm. Functionally, participates in MYC-mediated cell transformation and apoptosis; induces anchorage-independent growth and clonogenicity in lymphoblastoid cells. Insufficient to induce tumorigenicity when overexpressed but contributes to MYC-mediated tumorigenesis. May play a role as transcriptional regulator. This is Cell division cycle-associated protein 7 (Cdca7) from Mus musculus (Mouse).